Here is a 632-residue protein sequence, read N- to C-terminus: Dihydrolipoyllysine-residue acetyltransferase component of pyruvate dehydrogenase complex, mitochondrial (632 aa).

The N-terminal 77 residues, 1-77 (MWRVCARRVQ…LLGSPSRRSY (77 aa)), are a transit peptide targeting the mitochondrion. Lipoyl-binding domains lie at 82-158 (HQKV…CITV) and 208-284 (HMQI…CIIV). Phosphoserine is present on S91. 2 positions are modified to N6-lipoyllysine: K123 and K249. A Peripheral subunit-binding (PSBD) domain is found at 342–379 (FVSPLAKKLAAEKGIDLTQVKGTGPEGRIIKKDIDSFV). R446 serves as a coordination point for CoA. At K451 the chain carries N6-acetyllysine. K458 is modified (N6-succinyllysine). Position 460 (S460) interacts with CoA. K532 is modified (N6-succinyllysine). CoA contacts are provided by S551, N552, and G576. Active-site residues include H605 and D609.

The protein belongs to the 2-oxoacid dehydrogenase family. In terms of assembly, part of the pyruvate dehydrogenase complex (PDHc) that is a multi-enzyme complex composed of multiple copies of three enzymes, pyruvate dehydrogenase (subunits PDH1A and PDHB, E1 component), dihydrolipoamide acetyltransferase (DLAT, E2 component), and dihydrolipoamide dehydrogenase (DLD, E3 component) to which is added an additional protein the E3-binding protein (PDHX, E3BP). In terms of structural architecture, the E2 and E3BP components assemble into a 60meric central core with icosahedral symmetry. The central core is decorated with E1 and E3 proteins. Currently, two alternative models for the E2:E3BP stoichiometry are considered as being either 48:12 (E2(48)-E3BP(12)) or 40:20 (E2(40)-E3BP(20)). Interacts with PDK2 and PDK3. Interacts with SIRT4. Interacts with PDHB. The cofactor is (R)-lipoate. In terms of processing, delipoylated at Lys-123 and Lys-249 by SIRT4, delipoylation decreases the PHD complex activity. In terms of tissue distribution, expressed in flagella of epididymal sperm.

Its subcellular location is the mitochondrion matrix. It carries out the reaction N(6)-[(R)-dihydrolipoyl]-L-lysyl-[protein] + acetyl-CoA = N(6)-[(R)-S(8)-acetyldihydrolipoyl]-L-lysyl-[protein] + CoA. As part of the pyruvate dehydrogenase complex, catalyzes the transfers of an acetyl group to a lipoic acid moiety. The pyruvate dehydrogenase complex, catalyzes the overall conversion of pyruvate to acetyl-CoA and CO(2), and thereby links cytoplasmic glycolysis and the mitochondrial tricarboxylic acid (TCA) cycle. This Rattus norvegicus (Rat) protein is Dihydrolipoyllysine-residue acetyltransferase component of pyruvate dehydrogenase complex, mitochondrial.